Here is a 90-residue protein sequence, read N- to C-terminus: Mitochondrial import inner membrane translocase subunit Tim10-B (90 aa).

A Twin CX3C motif motif is present at residues 29–54 (CHKKCVPPHYKEAELSKGESVCLDRC). 2 disulfides stabilise this stretch: Cys29-Cys54 and Cys33-Cys50.

This sequence belongs to the small Tim family. In terms of assembly, heterohexamer; composed of 3 copies of TIMM9 and 3 copies of TIMM10/TIM10A, named soluble 70 kDa complex. The complex forms a 6-bladed alpha-propeller structure and associates with the TIMM22 component of the TIM22 complex. Interacts with multi-pass transmembrane proteins in transit.

It is found in the mitochondrion inner membrane. Mitochondrial intermembrane chaperone that participates in the import and insertion of multi-pass transmembrane proteins into the mitochondrial inner membrane. May also be required for the transfer of beta-barrel precursors from the TOM complex to the sorting and assembly machinery (SAM complex) of the outer membrane. Acts as a chaperone-like protein that protects the hydrophobic precursors from aggregation and guide them through the mitochondrial intermembrane space. The polypeptide is Mitochondrial import inner membrane translocase subunit Tim10-B (timm10-b) (Xenopus laevis (African clawed frog)).